The primary structure comprises 528 residues: Endoglucanase 24 (528 aa).

The signal sequence occupies residues 1–24 (MGSKTKGCCGWLIVALVASLVATA). Asp109 functions as the Nucleophile in the catalytic mechanism. Residue Asn259 is glycosylated (N-linked (GlcNAc...) asparagine). His446 is a catalytic residue. Asn487 carries an N-linked (GlcNAc...) asparagine glycan. Active-site residues include Asp492 and Glu501.

The protein belongs to the glycosyl hydrolase 9 (cellulase E) family.

It localises to the secreted. It catalyses the reaction Endohydrolysis of (1-&gt;4)-beta-D-glucosidic linkages in cellulose, lichenin and cereal beta-D-glucans.. The protein is Endoglucanase 24 of Oryza sativa subsp. japonica (Rice).